A 736-amino-acid chain; its full sequence is Zinc finger MYND domain-containing protein 15 (736 aa).

Disordered regions lie at residues 70 to 94 (SLGQ…DEPP) and 109 to 192 (LEDG…KNAE). Residues 110-123 (EDGEEGEEEEEDEE) are compositionally biased toward acidic residues. Composition is skewed to basic and acidic residues over residues 124–135 (HGERPGMEKVEP) and 165–185 (ASRE…PEKR). 8 residues coordinate Zn(2+): Cys-307, Cys-310, Cys-322, Cys-325, Cys-331, Cys-335, His-349, and Cys-353. An MYND-type zinc finger spans residues 307-353 (CHVCHKHSFEVKLTPCPQCSAVLYCGEACLQADWRRCPDDVSHRFWC). 2 disordered regions span residues 556–583 (DGPE…GGRR) and 696–736 (GGTV…RRRR). Positions 704–718 (GPAPRPPTPAAPPVP) are enriched in pro residues. Residues 719-736 (ARRRRGEKKAARGPRRRR) are compositionally biased toward basic residues.

In terms of assembly, interacts with HDAC1, HDAC3, HDAC6 and, to a lesser extent, with HDAC7. Testis-specific. Expressed in pachytene spermatocytes and all developing spermatids, but not in Sertoli, nor Leydig cells (at protein level).

It localises to the nucleus. The protein localises to the cytoplasm. Acts as a transcriptional repressor through interaction with histone deacetylases (HDACs). May regulate haploid genes important for spermiogenesis. The protein is Zinc finger MYND domain-containing protein 15 (Zmynd15) of Mus musculus (Mouse).